The following is a 348-amino-acid chain: Centromere protein N-B (348 aa).

Belongs to the CENP-N/CHL4 family.

Its subcellular location is the nucleus. It localises to the chromosome. The protein resides in the centromere. Its function is as follows. Probable component of a centromeric complex involved in assembly of kinetochore proteins, mitotic progression and chromosome segregation. This is Centromere protein N-B (cenpn-b) from Xenopus laevis (African clawed frog).